Reading from the N-terminus, the 327-residue chain is uncharacterized protein (327 aa).

The S4 RNA-binding domain maps to 32–105 (VRLDKWLAEQ…IPLDILYEDE (74 aa)). D156 is an active-site residue.

This sequence belongs to the pseudouridine synthase RluA family.

The enzyme catalyses a uridine in RNA = a pseudouridine in RNA. This is an uncharacterized protein from Synechocystis sp. (strain ATCC 27184 / PCC 6803 / Kazusa).